The primary structure comprises 430 residues: Leucoanthocyanidin dioxygenase (430 aa).

Residues 212–311 (LLLQMKINYY…RFSWAIFCEP (100 aa)) form the Fe2OG dioxygenase domain. Histidine 236, aspartate 238, and histidine 292 together coordinate Fe cation. 2 stretches are compositionally biased toward basic and acidic residues: residues 376 to 407 (KKDN…KEDG) and 415 to 430 (KVFK…EESK). Residues 376-430 (KKDNQDAVAENKDIKEDEQCGPAEHKDIKEDGQGAAAENKVFKENNQDVAAEESK) are disordered.

It belongs to the iron/ascorbate-dependent oxidoreductase family. The cofactor is Fe cation. L-ascorbate is required as a cofactor. Predominantly expressed in corollas and at lower levels in anthers.

The catalysed reaction is a (2R,3S,4S)-leucoanthocyanidin + 2-oxoglutarate + O2 = a 4-H-anthocyanidin with a 3-hydroxy group + succinate + CO2 + 2 H2O. It participates in pigment biosynthesis; anthocyanin biosynthesis. Oxidation of leucoanthocyanidins into anthocyanidins. This chain is Leucoanthocyanidin dioxygenase (ANT17), found in Petunia hybrida (Petunia).